A 438-amino-acid polypeptide reads, in one-letter code: Serine hydroxymethyltransferase (438 aa).

Residues Leu-119 and 123 to 125 each bind (6S)-5,6,7,8-tetrahydrofolate; that span reads GHL. Lys-228 is modified (N6-(pyridoxal phosphate)lysine). 370–372 is a binding site for (6S)-5,6,7,8-tetrahydrofolate; that stretch reads SPF.

The protein belongs to the SHMT family. Homodimer. Requires pyridoxal 5'-phosphate as cofactor.

It is found in the cytoplasm. It carries out the reaction (6R)-5,10-methylene-5,6,7,8-tetrahydrofolate + glycine + H2O = (6S)-5,6,7,8-tetrahydrofolate + L-serine. The protein operates within one-carbon metabolism; tetrahydrofolate interconversion. It functions in the pathway amino-acid biosynthesis; glycine biosynthesis; glycine from L-serine: step 1/1. In terms of biological role, catalyzes the reversible interconversion of serine and glycine with tetrahydrofolate (THF) serving as the one-carbon carrier. This reaction serves as the major source of one-carbon groups required for the biosynthesis of purines, thymidylate, methionine, and other important biomolecules. Also exhibits THF-independent aldolase activity toward beta-hydroxyamino acids, producing glycine and aldehydes, via a retro-aldol mechanism. The sequence is that of Serine hydroxymethyltransferase from Pelodictyon phaeoclathratiforme (strain DSM 5477 / BU-1).